The following is a 360-amino-acid chain: GTP 3',8-cyclase (360 aa).

The segment at 1–31 (MTVTALGVPTVRGRSEGSAVASDAPGDGPLL) is disordered. The 219-residue stretch at 33–251 (RFGRSATDLR…LQPHFRLRPD (219 aa)) folds into the Radical SAM core domain. R42 lines the GTP pocket. C49 and C53 together coordinate [4Fe-4S] cluster. Y55 provides a ligand contact to S-adenosyl-L-methionine. A [4Fe-4S] cluster-binding site is contributed by C56. R93 contacts GTP. G97 is an S-adenosyl-L-methionine binding site. T124 contacts GTP. S148 lines the S-adenosyl-L-methionine pocket. K185 contacts GTP. M219 serves as a coordination point for S-adenosyl-L-methionine. Residues C287 and C290 each contribute to the [4Fe-4S] cluster site. 292 to 294 (RTR) lines the GTP pocket. [4Fe-4S] cluster is bound at residue C304.

The protein belongs to the radical SAM superfamily. MoaA family. Monomer and homodimer. It depends on [4Fe-4S] cluster as a cofactor.

The catalysed reaction is GTP + AH2 + S-adenosyl-L-methionine = (8S)-3',8-cyclo-7,8-dihydroguanosine 5'-triphosphate + 5'-deoxyadenosine + L-methionine + A + H(+). It participates in cofactor biosynthesis; molybdopterin biosynthesis. Its function is as follows. Catalyzes the cyclization of GTP to (8S)-3',8-cyclo-7,8-dihydroguanosine 5'-triphosphate. The protein is GTP 3',8-cyclase of Mycobacterium ulcerans (strain Agy99).